The chain runs to 147 residues: Hemoglobin subunit epsilon (147 aa).

The Globin domain maps to 3-147 (HLTAEEKAAI…VAIALGHKYH (145 aa)). Phosphoserine is present on residues serine 14 and serine 51. Heme b is bound by residues histidine 64 and histidine 93.

Belongs to the globin family. In terms of assembly, heterotetramer of two alpha chains and two epsilon chains in early embryonic hemoglobin Gower-2; two zeta chains and two epsilon chains in early embryonic hemoglobin Gower-1. Red blood cells.

Functionally, the epsilon chain is a beta-type chain of early mammalian embryonic hemoglobin. This chain is Hemoglobin subunit epsilon (HBE1), found in Ateles belzebuth (White-bellied spider monkey).